Here is a 125-residue protein sequence, read N- to C-terminus: Ribosome-binding factor A (125 aa).

The protein belongs to the RbfA family. In terms of assembly, monomer. Binds 30S ribosomal subunits, but not 50S ribosomal subunits or 70S ribosomes.

Its subcellular location is the cytoplasm. Functionally, one of several proteins that assist in the late maturation steps of the functional core of the 30S ribosomal subunit. Associates with free 30S ribosomal subunits (but not with 30S subunits that are part of 70S ribosomes or polysomes). Required for efficient processing of 16S rRNA. May interact with the 5'-terminal helix region of 16S rRNA. This chain is Ribosome-binding factor A, found in Fervidobacterium nodosum (strain ATCC 35602 / DSM 5306 / Rt17-B1).